Here is a 218-residue protein sequence, read N- to C-terminus: MSVTIPQKDNQSLNKAGMGNTVRIAGVDEAGRGPLSGPVVAAAVILDPTRPITGLGDSKALSERRRRELFRLIRANAWVGIGIAEPAEIDRLNILHATMAAMRRAVARLPVRPTLVLVDGNRLPPGLPCPAEAIIKGDAKEACIGAASIIAKTVRDDLMEQAARRFPGYGFEGHKGYPSAAHKAALETSGACPIHRRSYAPVRAALESRFSTNANRCG.

In terms of domain architecture, RNase H type-2 spans 22–211; it reads VRIAGVDEAG…VRAALESRFS (190 aa). The a divalent metal cation site is built by aspartate 28, glutamate 29, and aspartate 119.

This sequence belongs to the RNase HII family. Mn(2+) serves as cofactor. Requires Mg(2+) as cofactor.

It is found in the cytoplasm. It catalyses the reaction Endonucleolytic cleavage to 5'-phosphomonoester.. In terms of biological role, endonuclease that specifically degrades the RNA of RNA-DNA hybrids. This chain is Ribonuclease HII, found in Maricaulis maris (strain MCS10) (Caulobacter maris).